A 134-amino-acid chain; its full sequence is Small ribosomal subunit protein bS6 (134 aa).

The segment at 99-134 (EPSAMMQKRDRDERKDRERGRRRDEDGFSGDRNEEN) is disordered. The segment covering 105-134 (QKRDRDERKDRERGRRRDEDGFSGDRNEEN) has biased composition (basic and acidic residues).

The protein belongs to the bacterial ribosomal protein bS6 family.

In terms of biological role, binds together with bS18 to 16S ribosomal RNA. The protein is Small ribosomal subunit protein bS6 of Methylobacterium nodulans (strain LMG 21967 / CNCM I-2342 / ORS 2060).